A 588-amino-acid polypeptide reads, in one-letter code: Transcription factor 7-like 1 (588 aa).

A compositionally biased stretch (gly residues) spans Met1 to Asp31. The tract at residues Met1–Glu74 is CTNNB1-binding. Disordered regions lie at residues Met1 to Tyr101, Ser203 to Tyr234, and Leu409 to Thr506. The segment covering Ser67–Asp81 has biased composition (low complexity). Residues Glu83 to Tyr101 are compositionally biased toward basic and acidic residues. A DNA-binding region (HMG box) is located at residues Val346–Ser414. The short motif at Lys421–Arg427 is the Nuclear localization signal element. Composition is skewed to low complexity over residues Leu431–Gln441 and Ser478–Ser497.

The protein belongs to the TCF/LEF family. As to quaternary structure, binds the armadillo repeat of CTNNB1 and forms a stable complex. Interacts with DAZAP2. In terms of tissue distribution, detected in hair follicles and skin keratinocytes, and at lower levels in stomach epithelium.

It is found in the nucleus. Functionally, participates in the Wnt signaling pathway. Binds to DNA and acts as a repressor in the absence of CTNNB1, and as an activator in its presence. Necessary for the terminal differentiation of epidermal cells, the formation of keratohyalin granules and the development of the barrier function of the epidermis. Down-regulates NQO1, leading to increased mitomycin c resistance. The chain is Transcription factor 7-like 1 (TCF7L1) from Homo sapiens (Human).